The primary structure comprises 336 residues: Holliday junction branch migration complex subunit RuvB (336 aa).

Positions Ala4–Tyr184 are large ATPase domain (RuvB-L). Residues Arg24, Gly65, Lys68, Thr69, Thr70, Glu131–Tyr133, Arg174, Tyr184, and Arg221 each bind ATP. Residue Thr69 coordinates Mg(2+). Residues Asn185–Asp255 are small ATPAse domain (RuvB-S). The tract at residues Asp258–Ala336 is head domain (RuvB-H). Positions 294, 313, and 318 each coordinate DNA.

This sequence belongs to the RuvB family. In terms of assembly, homohexamer. Forms an RuvA(8)-RuvB(12)-Holliday junction (HJ) complex. HJ DNA is sandwiched between 2 RuvA tetramers; dsDNA enters through RuvA and exits via RuvB. An RuvB hexamer assembles on each DNA strand where it exits the tetramer. Each RuvB hexamer is contacted by two RuvA subunits (via domain III) on 2 adjacent RuvB subunits; this complex drives branch migration. In the full resolvosome a probable DNA-RuvA(4)-RuvB(12)-RuvC(2) complex forms which resolves the HJ.

The protein localises to the cytoplasm. The enzyme catalyses ATP + H2O = ADP + phosphate + H(+). The RuvA-RuvB-RuvC complex processes Holliday junction (HJ) DNA during genetic recombination and DNA repair, while the RuvA-RuvB complex plays an important role in the rescue of blocked DNA replication forks via replication fork reversal (RFR). RuvA specifically binds to HJ cruciform DNA, conferring on it an open structure. The RuvB hexamer acts as an ATP-dependent pump, pulling dsDNA into and through the RuvAB complex. RuvB forms 2 homohexamers on either side of HJ DNA bound by 1 or 2 RuvA tetramers; 4 subunits per hexamer contact DNA at a time. Coordinated motions by a converter formed by DNA-disengaged RuvB subunits stimulates ATP hydrolysis and nucleotide exchange. Immobilization of the converter enables RuvB to convert the ATP-contained energy into a lever motion, pulling 2 nucleotides of DNA out of the RuvA tetramer per ATP hydrolyzed, thus driving DNA branch migration. The RuvB motors rotate together with the DNA substrate, which together with the progressing nucleotide cycle form the mechanistic basis for DNA recombination by continuous HJ branch migration. Branch migration allows RuvC to scan DNA until it finds its consensus sequence, where it cleaves and resolves cruciform DNA. The sequence is that of Holliday junction branch migration complex subunit RuvB from Shewanella frigidimarina (strain NCIMB 400).